A 248-amino-acid polypeptide reads, in one-letter code: DNA repair protein RecO (248 aa).

Belongs to the RecO family.

In terms of biological role, involved in DNA repair and RecF pathway recombination. This chain is DNA repair protein RecO, found in Streptomyces avermitilis (strain ATCC 31267 / DSM 46492 / JCM 5070 / NBRC 14893 / NCIMB 12804 / NRRL 8165 / MA-4680).